Consider the following 181-residue polypeptide: Squamosa promoter-binding-like protein 5 (181 aa).

Positions 1–10 (MEGQRTQRRG) are enriched in basic residues. The interval 1–58 (MEGQRTQRRGYLKDKATVSNLVEEEMENGMDGEEEDGGDEDKRKKVMERVRGPSTDRV) is disordered. Acidic residues predominate over residues 22–39 (VEEEMENGMDGEEEDGGD). Positions 40–51 (EDKRKKVMERVR) are enriched in basic and acidic residues. An SBP-type zinc finger spans residues 60–137 (SRLCQVDRCT…AGHNERRRKI (78 aa)). The Zn(2+) site is built by Cys-63, Cys-68, Cys-85, His-88, Cys-104, Cys-107, His-111, and Cys-123. The short motif at 120 to 136 (KRSCRRRLAGHNERRRK) is the Bipartite nuclear localization signal element. The disordered stretch occupies residues 128–181 (AGHNERRRKISGDSFGEGSGRRGFSGQLIQTQERNRVDRKLPMTNSSFKRPQIR). The segment covering 170–181 (MTNSSFKRPQIR) has biased composition (polar residues).

Zn(2+) serves as cofactor. Expressed in the inflorescence apical meristem and young flowers.

The protein localises to the nucleus. It is found in the cytoplasm. In terms of biological role, trans-acting factor that binds specifically to the consensus nucleotide sequence 5'-TNCGTACAA-3' of AP1 promoter. Promotes both vegetative phase change and flowering. In Arabidopsis thaliana (Mouse-ear cress), this protein is Squamosa promoter-binding-like protein 5 (SPL5).